A 302-amino-acid chain; its full sequence is DNA-directed RNA polymerase II subunit rpb3 (302 aa).

It belongs to the archaeal Rpo3/eukaryotic RPB3 RNA polymerase subunit family. As to quaternary structure, component of the RNA polymerase II (Pol II) complex consisting of 12 subunits.

It is found in the nucleus. Functionally, DNA-dependent RNA polymerase catalyzes the transcription of DNA into RNA using the four ribonucleoside triphosphates as substrates. Component of RNA polymerase II which synthesizes mRNA precursors and many functional non-coding RNAs. Pol II is the central component of the basal RNA polymerase II transcription machinery. It is composed of mobile elements that move relative to each other. Rpb3 is part of the core element with the central large cleft and the clamp element that moves to open and close the cleft. This is DNA-directed RNA polymerase II subunit rpb3 (polr2c) from Dictyostelium discoideum (Social amoeba).